Reading from the N-terminus, the 1605-residue chain is Ribosome-binding protein 1 (1605 aa).

The Lumenal segment spans residues 1–7 (MDIYDTQ). A helical membrane pass occupies residues 8–28 (TLGVVVFGGFMVVSAIGIFLV). The Cytoplasmic portion of the chain corresponds to 29 to 1605 (STFSMKETSY…GSSSKEGTSV (1577 aa)). Residues 44-88 (NQRKEMAKTHHQKGEKKKKEKTVEKKGKTKKKEEKPNGKIPEHDL) are disordered. Over residues 52 to 63 (THHQKGEKKKKE) the composition is skewed to basic residues. Residues 64–88 (KTVEKKGKTKKKEEKPNGKIPEHDL) are compositionally biased toward basic and acidic residues. Ser111 is subject to Phosphoserine. Residues 114-150 (SSVGHTPIATVPAMPQEKLASSPKDRKKKEKKVAKVE) are disordered. Residue Lys148 forms a Glycyl lysine isopeptide (Lys-Gly) (interchain with G-Cter in SUMO2) linkage. Ser159 and Ser165 each carry phosphoserine. A disordered region spans residues 172-849 (ATPKEVPMVA…PGPPDCDGPL (678 aa)). A run of 61 repeats spans residues 196 to 205 (SQGKKGQGAQ), 206 to 215 (NQAKKGEGAQ), 216 to 225 (NQGKKGEGAQ), 226 to 235 (NQAKKGEGAQ), 236 to 245 (NQAKKGEGAQ), 246 to 255 (NQGKKGEGAQ), 256 to 265 (NQAKKGEGGQ), 266 to 275 (NQAKKGEGAQ), 276 to 285 (NQGKKGEGAQ), 286 to 295 (NQGKKGEGAQ), 296 to 305 (NQAKKGEGAQ), 306 to 315 (NQAKKGEGAQ), 316 to 325 (NQGKKGEGAQ), 326 to 335 (NQSKKGEGAQ), 336 to 345 (NQAKKGEGGQ), 346 to 355 (NQAKKGEGAQ), 356 to 365 (NQAKKGEGAQ), 366 to 375 (NQAKKGEGVQ), 376 to 385 (NQAKKGVEGA), 386 to 395 (QNQGKKGEAN), 396 to 405 (QNQAKKGEGG), 406 to 415 (QNQTKKGEGP), 416 to 425 (QNQGKKGEAA), 426 to 435 (QKQDKKIEGA), 436 to 445 (QNQGKKPEGT), 446 to 455 (SNQGKKGEGA), 456 to 465 (QNQGKKGEGA), 466 to 475 (QNQSKKGEGA), 476 to 485 (QNQAKKGEGG), 486 to 495 (QNQAKKGEGA), 496 to 505 (QNQAKKGEGA), 506 to 515 (QNQAKKGEGV), 516 to 525 (QNQAKKGVEG), 527 to 536 (QNQGKKGEAN), 537 to 546 (QNQAKKGEGG), 547 to 556 (QNQTKKGEGP), 557 to 566 (QNQGKKGEAA), 567 to 576 (QKQDKKIEGA), 577 to 586 (QNQGKKPEGT), 587 to 596 (SNQGKKGEGA), 597 to 606 (QNQGKKGEGA), 607 to 616 (QNQGKKGEGA), 617 to 626 (QNQGKKGEGA), 628 to 637 (NQGKKGEGAQ), 638 to 647 (NQGKKGEGAQ), 648 to 657 (NQGKKGEGAQ), 658 to 667 (NQGKKGEGPQ), 668 to 677 (NQAKKGEGAQ), 678 to 687 (NQGKKGEGAQ), 688 to 697 (NQGKKGEGAQ), 698 to 707 (NQGKKAEGVQ), 708 to 717 (SQSKKGEGTQ), 718 to 727 (NQGKKGDGNP), 729 to 738 (QGKKGEGASN), 739 to 748 (QNRKTDTVAN), 749 to 758 (QGTKQEGVSN), 759 to 768 (QVKKSEGSPN), 769 to 778 (QGKKAEGAPN), 779 to 788 (QGKKKDGSPS), 789 to 798 (QAKKVDAAAN), and 799 to 808 (QGKKSEMAPA). The interval 196 to 808 (SQGKKGQGAQ…QGKKSEMAPA (613 aa)) is 61 X 10 AA tandem repeats of [NSQ]-[NKQVGA]-[GSAQKRT]-[ASGDTK]-[KGTQSAV]-[KGAED]-[EQVGIPTDMA]-[EGVAS]-[AGVPETNS]-[AQNGPTVS]. Over residues 197–208 (QGKKGQGAQNQA) the composition is skewed to low complexity. Composition is skewed to polar residues over residues 224 to 258 (AQNQ…QNQA), 274 to 338 (AQNQ…QNQA), 354 to 378 (AQNQ…QNQA), and 385 to 399 (AQNQ…QNQA). Basic and acidic residues predominate over residues 420–433 (KKGEAAQKQDKKIE). Composition is skewed to polar residues over residues 435–479 (AQNQ…QNQA), 495–519 (AQNQ…QNQA), and 526–540 (AQNQ…QNQA). Over residues 561-574 (KKGEAAQKQDKKIE) the composition is skewed to basic and acidic residues. 2 stretches are compositionally biased toward polar residues: residues 576-720 (AQNQ…QNQG) and 736-769 (ASNQ…SPNQ). Residue Ser786 is modified to Phosphoserine. Over residues 811 to 821 (QKASMVQSQEA) the composition is skewed to polar residues. At Ser818 the chain carries Phosphoserine. Residue Lys823 forms a Glycyl lysine isopeptide (Lys-Gly) (interchain with G-Cter in SUMO1) linkage. Lys1135 is modified (N6-acetyllysine). Phosphoserine occurs at positions 1162 and 1178. Disordered stretches follow at residues 1460 to 1481 (MRSH…AEQD) and 1571 to 1605 (TTQE…GTSV). The span at 1576-1598 (LTKEKDTVKKLQEQLGKAEDGSS) shows a compositional bias: basic and acidic residues.

Widely expressed.

It localises to the endoplasmic reticulum membrane. Its function is as follows. Acts as a ribosome receptor and mediates interaction between the ribosome and the endoplasmic reticulum membrane. This Mus musculus (Mouse) protein is Ribosome-binding protein 1 (Rrbp1).